Reading from the N-terminus, the 326-residue chain is Beta-1,3-galactosyltransferase 1 (326 aa).

At 1-6 (MASKVS) the chain is on the cytoplasmic side. Residues 7 to 26 (CLYVLTVVCWASALWYLSIT) traverse the membrane as a helical; Signal-anchor for type II membrane protein segment. Over 27–326 (RPTSSYTGSK…DMSSKKHLRC (300 aa)) the chain is Lumenal. N-linked (GlcNAc...) asparagine glycans are attached at residues Asn-47 and Asn-151.

Belongs to the glycosyltransferase 31 family. Mn(2+) serves as cofactor.

It is found in the golgi apparatus membrane. The enzyme catalyses an N-acetyl-beta-D-glucosaminyl derivative + UDP-alpha-D-galactose = a beta-D-galactosyl-(1-&gt;3)-N-acetyl-beta-D-glucosaminyl derivative + UDP + H(+). The catalysed reaction is a beta-D-GlcNAc-(1-&gt;3)-beta-D-Gal-(1-&gt;4)-beta-D-Glc-(1&lt;-&gt;1)-Cer(d18:1(4E)) + UDP-alpha-D-galactose = a beta-D-Gal-(1-&gt;3)-beta-D-GlcNAc-(1-&gt;3)-beta-D-Gal-(1-&gt;4)-beta-D-Glc-(1&lt;-&gt;1')-Cer(d18:1(4E)) + UDP + H(+). It participates in protein modification; protein glycosylation. Its function is as follows. Beta-1,3-galactosyltransferase that transfers galactose from UDP-galactose to substrates with a terminal beta-N-acetylglucosamine (beta-GlcNAc) residue. Involved in the biosynthesis of the carbohydrate moieties of glycolipids and glycoproteins. The polypeptide is Beta-1,3-galactosyltransferase 1 (B3GALT1) (Gorilla gorilla gorilla (Western lowland gorilla)).